Reading from the N-terminus, the 361-residue chain is Phosphoserine aminotransferase (361 aa).

Position 43 (Arg-43) interacts with L-glutamate. Pyridoxal 5'-phosphate is bound by residues Trp-103, Thr-153, Asp-173, and Gln-196. Lys-197 is subject to N6-(pyridoxal phosphate)lysine. 238-239 (NT) lines the pyridoxal 5'-phosphate pocket.

This sequence belongs to the class-V pyridoxal-phosphate-dependent aminotransferase family. SerC subfamily. As to quaternary structure, homodimer. Pyridoxal 5'-phosphate is required as a cofactor.

Its subcellular location is the cytoplasm. It catalyses the reaction O-phospho-L-serine + 2-oxoglutarate = 3-phosphooxypyruvate + L-glutamate. The catalysed reaction is 4-(phosphooxy)-L-threonine + 2-oxoglutarate = (R)-3-hydroxy-2-oxo-4-phosphooxybutanoate + L-glutamate. Its pathway is amino-acid biosynthesis; L-serine biosynthesis; L-serine from 3-phospho-D-glycerate: step 2/3. It functions in the pathway cofactor biosynthesis; pyridoxine 5'-phosphate biosynthesis; pyridoxine 5'-phosphate from D-erythrose 4-phosphate: step 3/5. Functionally, catalyzes the reversible conversion of 3-phosphohydroxypyruvate to phosphoserine and of 3-hydroxy-2-oxo-4-phosphonooxybutanoate to phosphohydroxythreonine. The sequence is that of Phosphoserine aminotransferase from Hahella chejuensis (strain KCTC 2396).